Reading from the N-terminus, the 245-residue chain is Uridylate kinase (245 aa).

12–15 (KLSG) is an ATP binding site. The segment at 20–25 (GEKGVG) is involved in allosteric activation by GTP. Residue glycine 54 participates in UMP binding. Glycine 55 and arginine 59 together coordinate ATP. UMP contacts are provided by residues aspartate 74 and 135–142 (VGSPYFST). The ATP site is built by asparagine 163, tyrosine 169, and aspartate 172.

Belongs to the UMP kinase family. Homohexamer.

It is found in the cytoplasm. It carries out the reaction UMP + ATP = UDP + ADP. Its pathway is pyrimidine metabolism; CTP biosynthesis via de novo pathway; UDP from UMP (UMPK route): step 1/1. With respect to regulation, allosterically activated by GTP. Inhibited by UTP. Catalyzes the reversible phosphorylation of UMP to UDP. This is Uridylate kinase from Streptococcus mutans serotype c (strain ATCC 700610 / UA159).